Here is a 330-residue protein sequence, read N- to C-terminus: Transcription factor TGA2 (330 aa).

Residues 1–48 (MADTSPRTDVSTDDDTDHPDLGSEGALVNTAASDSSDRSKGKMDQKTL) form a disordered region. Basic and acidic residues predominate over residues 35 to 47 (SSDRSKGKMDQKT). Residues 44-107 (DQKTLRRLAQ…GTGDQAHSTG (64 aa)) form the bZIP domain. 2 coiled-coil regions span residues 45-142 (QKTL…HAGD) and 217-244 (INNL…SLAD). The segment at 46 to 66 (KTLRRLAQNREAARKSRLRKK) is basic motif. Residues 72–86 (LENSRLKLTQLEQEL) are leucine-zipper. The region spanning 111–327 (ALAFDAEHSR…RALSSLWLAR (217 aa)) is the DOG1 domain.

The protein belongs to the bZIP family. As to quaternary structure, binds DNA as a dimer. Interacts with NPR1, NPR3 and NPR4. Interacts with GRXC7/ROXY1 and GRXC9/GRX480. Expressed in the whole plant.

It is found in the nucleus. Transcriptional activator that binds specifically to the DNA sequence 5'-TGACG-3'. Recognizes ocs elements like the as-1 motif of the cauliflower mosaic virus 35S promoter. Binding to the as-1-like cis elements mediate auxin- and salicylic acid-inducible transcription. Required to induce the systemic acquired resistance (SAR) via the regulation of pathogenesis-related genes expression. Binding to the as-1 element of PR-1 promoter is salicylic acid-inducible and mediated by NPR1. Could also bind to the C-boxes (5'-ATGACGTCAT-3') with high affinity. This Arabidopsis thaliana (Mouse-ear cress) protein is Transcription factor TGA2 (TGA2).